The sequence spans 388 residues: Meiotic driver wtf13 (388 aa).

Residues 1-29 show a composition bias toward basic and acidic residues; it reads MKNKDYPLRSSMDELSTKNDNEIDLEKGP. The tract at residues 1–39 is disordered; the sequence is MKNKDYPLRSSMDELSTKNDNEIDLEKGPLPEYNSEDGS. 9 consecutive transmembrane segments (helical) span residues 89–109, 119–139, 152–172, 182–202, 207–227, 243–263, 267–287, 297–317, and 331–351; these read LLIS…CVNP, AFSV…FCFF, VTVI…AQCV, CVKV…VGLY, DLVV…FGCV, CSIS…IWTL, LFGL…TKGL, ATGY…LFFY, and FIGN…GGIG.

Belongs to the WTF family. In terms of assembly, homomer. Forms protein aggregates. The two isoforms can interact with each other and with themselves. High sequence similarity is required for their interaction.

Its subcellular location is the spore membrane. The protein localises to the vacuole membrane. The protein resides in the ascus epiplasm. It is found in the cytoplasm. It localises to the endoplasmic reticulum membrane. Its function is as follows. Promotes unequal transmission of alleles from the parental zygote to progeny spores by acting as poison/antidote system where the poison and antidote proteins are produced from the same locus; the poison component is trans-acting and targets all spores within an ascus whereas the antidote component is spore-specific, leading to poisoning of all progeny that do not inherit the allele. Functionally, localizes isoform 2 to the vacuole thereby facilitating its degradation. In addition to suppressing isoform 2, also suppresses S.pombe strain FY29033 wtf18 isoform 2. In terms of biological role, forms toxic aggregates that disrupt spore maturation. The sequence is that of Meiotic driver wtf13 from Schizosaccharomyces pombe (strain 972 / ATCC 24843) (Fission yeast).